Here is a 166-residue protein sequence, read N- to C-terminus: Small ribosomal subunit protein uS5 (166 aa).

In terms of domain architecture, S5 DRBM spans 11–74; sequence LQEKLIAVNR…EKARRNMKTV (64 aa).

It belongs to the universal ribosomal protein uS5 family. As to quaternary structure, part of the 30S ribosomal subunit. Contacts proteins S4 and S8.

With S4 and S12 plays an important role in translational accuracy. Its function is as follows. Located at the back of the 30S subunit body where it stabilizes the conformation of the head with respect to the body. This Photorhabdus laumondii subsp. laumondii (strain DSM 15139 / CIP 105565 / TT01) (Photorhabdus luminescens subsp. laumondii) protein is Small ribosomal subunit protein uS5.